A 206-amino-acid chain; its full sequence is METTMKKKGRVKATITSQKEEEGTVRKGPWTMEEDFILFNYILNHGEGLWNSVAKASGLKRTGKSCRLRWLNYLRPDVRRGNITEEEQLLIIQLHAKLGNRWSKIAKHLPGRTDNEIKNFWRTKIQRHMKVSSENMMNHQHHCSGNSQSSGMTTQGSSGKAIDTAESFSQAKTTTFNVVEQQSNENYWNVEDLWPVHLLNGDHHVI.

The span at 1-11 shows a compositional bias: basic residues; the sequence is METTMKKKGRV. Residues 1-20 are disordered; it reads METTMKKKGRVKATITSQKE. 2 HTH myb-type domains span residues 22–74 and 75–129; these read EGTV…LNYL and RPDV…QRHM. DNA-binding regions (H-T-H motif) lie at residues 50 to 74 and 102 to 125; these read WNSVAKASGLKRTGKSCRLRWLNYL and WSKIAKHLPGRTDNEIKNFWRTKI. Residues 138-162 are disordered; it reads NHQHHCSGNSQSSGMTTQGSSGKAI. A compositionally biased stretch (low complexity) spans 144–159; the sequence is SGNSQSSGMTTQGSSG.

As to expression, expressed specifically in flowers.

The protein resides in the nucleus. Transcription factor acting redundantly with MYB21 and MYB24 to control stamen filament elongation in the late developed flowers. Repressed at the transcript levels by DELLA proteins. This chain is Transcription factor MYB57 (MYB57), found in Arabidopsis thaliana (Mouse-ear cress).